A 348-amino-acid chain; its full sequence is Fructose-1,6-bisphosphatase (348 aa).

A Pro/N-degron motif is present at residues 2–5 (PTLV). Phosphoserine is present on S12. AMP contacts are provided by residues 27-31 (IIEHQ) and 38-42 (TGDFT). Mg(2+) contacts are provided by D79 and E108. Residue 122–123 (SY) participates in AMP binding. Mg(2+) contacts are provided by D128, I130, and D131. 131-134 (DGSS) lines the substrate pocket. R150 serves as a coordination point for AMP. Substrate-binding positions include 222–225 (NEGN), 255–260 (RYVGSM), Y276, and 286–288 (KLR). Residue E292 coordinates Mg(2+).

This sequence belongs to the FBPase class 1 family. In terms of assembly, homotetramer. Mg(2+) serves as cofactor. Post-translationally, ubiquitinated. Targeted for proteasomal degradation when cells are shifted to glucose-containing growth medium.

The enzyme catalyses beta-D-fructose 1,6-bisphosphate + H2O = beta-D-fructose 6-phosphate + phosphate. Its pathway is carbohydrate biosynthesis; gluconeogenesis. Its activity is regulated as follows. Subject to complex allosteric regulation. The enzyme can assume an active R-state, or an inactive T-state. Intermediate conformations may exist. AMP acts as allosteric inhibitor. AMP binding affects the turnover of bound substrate and not the affinity for substrate. The chain is Fructose-1,6-bisphosphatase (FBP1) from Saccharomyces cerevisiae (strain ATCC 204508 / S288c) (Baker's yeast).